A 68-amino-acid chain; its full sequence is Protein SlyX homolog (68 aa).

This sequence belongs to the SlyX family.

The sequence is that of Protein SlyX homolog from Ectopseudomonas mendocina (strain ymp) (Pseudomonas mendocina).